A 342-amino-acid chain; its full sequence is L-threonine 3-dehydrogenase (342 aa).

Cys38 is a binding site for Zn(2+). Residues Thr40 and His43 each act as charge relay system in the active site. The Zn(2+) site is built by His63, Glu64, Cys93, Cys96, Cys99, and Cys107. NAD(+) contacts are provided by residues Ile175, Asp195, Arg200, Leu262–Ile264, and Ile286–Tyr287.

Belongs to the zinc-containing alcohol dehydrogenase family. As to quaternary structure, homotetramer. Zn(2+) is required as a cofactor.

The protein resides in the cytoplasm. It carries out the reaction L-threonine + NAD(+) = (2S)-2-amino-3-oxobutanoate + NADH + H(+). The protein operates within amino-acid degradation; L-threonine degradation via oxydo-reductase pathway; glycine from L-threonine: step 1/2. Functionally, catalyzes the NAD(+)-dependent oxidation of L-threonine to 2-amino-3-ketobutyrate. The polypeptide is L-threonine 3-dehydrogenase (Burkholderia cenocepacia (strain ATCC BAA-245 / DSM 16553 / LMG 16656 / NCTC 13227 / J2315 / CF5610) (Burkholderia cepacia (strain J2315))).